Reading from the N-terminus, the 151-residue chain is uncharacterized protein (151 aa).

To equivalent protein in phage 82.

This is an uncharacterized protein from Escherichia coli (strain K12).